A 393-amino-acid polypeptide reads, in one-letter code: MTNSNRIKLTWISFLSYALTGALVIVTGMVMGNIADYFHLPVSSMSNTFTFLNAGILISIFLNAWLMEIIPLKTQLRFGFILMVLAVAGLMFGHSLALFSAAMFVLGLVSGITMSIGTFLITQLYEGRQRGSRLLFTDSFFSMAGMIFPMVAAFLLARSIEWYWVYACIGLVYLAIFILTFGCEFPALGKHAQHSQAPVVKEKWGIGVLFLAVAALCYILGQLGFISWVPEYAKGLGMSLNDAGALVSDFWMSYMFGMWAFSFILRFFDLQRILTVLAGMAAVLMYLFITGTQAHMPWFILTLGFFSSAIYTSIITLGSQQTKVASPKLVNFILTCGTIGTMLTFVVTGPIVAHSGPQAALLTANGLYAVVFVMCFALGFVSRHRQHSAPATH.

The Cytoplasmic portion of the chain corresponds to 1 to 10; it reads MTNSNRIKLT. The helical transmembrane segment at 11 to 31 threads the bilayer; it reads WISFLSYALTGALVIVTGMVM. Over 32-50 the chain is Periplasmic; it reads GNIADYFHLPVSSMSNTFT. The chain crosses the membrane as a helical span at residues 51–71; that stretch reads FLNAGILISIFLNAWLMEIIP. Topologically, residues 72–77 are cytoplasmic; that stretch reads LKTQLR. Residues 78-98 form a helical membrane-spanning segment; that stretch reads FGFILMVLAVAGLMFGHSLAL. The Periplasmic segment spans residues 99 to 100; sequence FS. Residues 101–121 traverse the membrane as a helical segment; sequence AAMFVLGLVSGITMSIGTFLI. The Cytoplasmic segment spans residues 122 to 133; it reads TQLYEGRQRGSR. The helical transmembrane segment at 134 to 154 threads the bilayer; it reads LLFTDSFFSMAGMIFPMVAAF. The Periplasmic portion of the chain corresponds to 155–161; that stretch reads LLARSIE. A helical membrane pass occupies residues 162 to 182; that stretch reads WYWVYACIGLVYLAIFILTFG. Over 183–205 the chain is Cytoplasmic; the sequence is CEFPALGKHAQHSQAPVVKEKWG. A helical transmembrane segment spans residues 206–226; the sequence is IGVLFLAVAALCYILGQLGFI. The Periplasmic portion of the chain corresponds to 227-244; that stretch reads SWVPEYAKGLGMSLNDAG. The helical transmembrane segment at 245–265 threads the bilayer; sequence ALVSDFWMSYMFGMWAFSFIL. At 266–272 the chain is on the cytoplasmic side; it reads RFFDLQR. Residues 273-293 form a helical membrane-spanning segment; sequence ILTVLAGMAAVLMYLFITGTQ. Over 294-297 the chain is Periplasmic; sequence AHMP. The helical transmembrane segment at 298-318 threads the bilayer; the sequence is WFILTLGFFSSAIYTSIITLG. The Cytoplasmic portion of the chain corresponds to 319-331; that stretch reads SQQTKVASPKLVN. Residues 332 to 352 traverse the membrane as a helical segment; the sequence is FILTCGTIGTMLTFVVTGPIV. Over 353 to 360 the chain is Periplasmic; that stretch reads AHSGPQAA. A helical membrane pass occupies residues 361 to 381; that stretch reads LLTANGLYAVVFVMCFALGFV. Residues 382 to 393 lie on the Cytoplasmic side of the membrane; that stretch reads SRHRQHSAPATH.

Belongs to the major facilitator superfamily. TsgA family.

It is found in the cell inner membrane. The protein is Protein TsgA of Salmonella choleraesuis (strain SC-B67).